We begin with the raw amino-acid sequence, 284 residues long: MDTAELTRLADCPAPAKLNLFLHVIGRRPDGYHLLQTAFRLLDWGDALSFELRHDGVVARATDLPGVSAEHDLVVRAARLLQSYTGCRLGADIRVDKRLPMGGGLGGGSSDAATTLIALNRLWRTGVRGEELTALGLRLGADVPFFIFGRDAFAEGVGDELRPLDLPPAWYVVVAPPVTVPTVEIFAAGELTRDTEPIKITDFAASTTRNDLQAVACSRYPEIGAAIDWLAQFAPARMTGSGACVFAQVASEDDAERIVASCPGSYRAWKARSVMQHPLRGWVG.

Lysine 17 is a catalytic residue. ATP is bound at residue 100–110 (PMGGGLGGGSS). The active site involves aspartate 142.

It belongs to the GHMP kinase family. IspE subfamily.

It carries out the reaction 4-CDP-2-C-methyl-D-erythritol + ATP = 4-CDP-2-C-methyl-D-erythritol 2-phosphate + ADP + H(+). The protein operates within isoprenoid biosynthesis; isopentenyl diphosphate biosynthesis via DXP pathway; isopentenyl diphosphate from 1-deoxy-D-xylulose 5-phosphate: step 3/6. Its function is as follows. Catalyzes the phosphorylation of the position 2 hydroxy group of 4-diphosphocytidyl-2C-methyl-D-erythritol. The chain is 4-diphosphocytidyl-2-C-methyl-D-erythritol kinase from Aromatoleum aromaticum (strain DSM 19018 / LMG 30748 / EbN1) (Azoarcus sp. (strain EbN1)).